The primary structure comprises 130 residues: Small ribosomal subunit protein uS9 (130 aa).

It belongs to the universal ribosomal protein uS9 family.

In Cupriavidus taiwanensis (strain DSM 17343 / BCRC 17206 / CCUG 44338 / CIP 107171 / LMG 19424 / R1) (Ralstonia taiwanensis (strain LMG 19424)), this protein is Small ribosomal subunit protein uS9.